The primary structure comprises 208 residues: Probable splicing factor, arginine/serine-rich 5 (208 aa).

One can recognise an RRM domain in the interval 2-74; sequence PRLYLGKIPY…MRLVVEMARG (73 aa). Residues 71–208 are disordered; it reads MARGKPRGND…RSPSPGSPKD (138 aa). Positions 84 to 123 are enriched in basic residues; that stretch reads SRSPRRRSRSPRRRSRTPPRRRSRSRDRKRSRRSRSRSSS. Basic and acidic residues predominate over residues 128 to 153; that stretch reads PVRESRRRSESRSPSPKRDLKREASR.

Belongs to the splicing factor SR family. Extensively phosphorylated on serine residues in the RS domain.

It is found in the nucleus. In terms of biological role, plays a functionally redundant role in shifting germ cell sexual differentiation in hermaphrodites. This Caenorhabditis elegans protein is Probable splicing factor, arginine/serine-rich 5 (rsp-5).